The following is a 390-amino-acid chain: Heparan sulfate glucosamine 3-O-sulfotransferase 3B1 (390 aa).

The tract at residues 1–25 (MGQRLSGGRSCLDVPGRFLPQPPPP) is disordered. At 1–32 (MGQRLSGGRSCLDVPGRFLPQPPPPPPPVRRK) the chain is on the cytoplasmic side. The chain crosses the membrane as a helical; Signal-anchor for type II membrane protein span at residues 33–53 (LALLFAMLCIWLYMFLYSCAG). Residues 54 to 390 (SCTAAPGLLL…QMTGRDFGWD (337 aa)) are Lumenal-facing. A disordered region spans residues 79 to 125 (TAPNETSPKMPFRAPPANSLAAGKDKTVGAGSQEEQSPEAPDSPSPI). Asn-82 carries an N-linked (GlcNAc...) asparagine glycan. A 3'-phosphoadenylyl sulfate-binding site is contributed by 147 to 151 (KGGTR). Residues 169–175 (EPHFFDR) and 200–203 (KTPS) contribute to the substrate site. 2 residues coordinate 3'-phosphoadenylyl sulfate: Arg-228 and Ser-236. A glycan (N-linked (GlcNAc...) asparagine) is linked at Asn-258. Residue 268-269 (WS) coordinates substrate. N-linked (GlcNAc...) asparagine glycosylation is present at Asn-329. The cysteines at positions 336 and 348 are disulfide-linked. 353 to 357 (KGRAH) contacts 3'-phosphoadenylyl sulfate.

The protein belongs to the sulfotransferase 1 family.

It localises to the golgi apparatus membrane. The enzyme catalyses alpha-D-glucosaminyl-[heparan sulfate](n) + 3'-phosphoadenylyl sulfate = 3-sulfo-alpha-D-glucosaminyl-[heparan sulfate](n) + adenosine 3',5'-bisphosphate + H(+). Its function is as follows. Sulfotransferase that utilizes 3'-phospho-5'-adenylyl sulfate (PAPS) to catalyze the transfer of a sulfo group to an N-unsubstituted glucosamine linked to a 2-O-sulfo iduronic acid unit on heparan sulfate. Catalyzes the O-sulfation of glucosamine in IdoUA2S-GlcNS and also in IdoUA2S-GlcNH2. Unlike HS3ST1/3-OST-1, does not convert non-anticoagulant heparan sulfate to anticoagulant heparan sulfate. The chain is Heparan sulfate glucosamine 3-O-sulfotransferase 3B1 (Hs3st3b1) from Mus musculus (Mouse).